The sequence spans 525 residues: Phosphoenolpyruvate carboxykinase (ATP) (525 aa).

Positions 54, 190, and 196 each coordinate substrate. ATP contacts are provided by residues K196, H215, and 231 to 239 (GLSGTGKTT). 2 residues coordinate Mn(2+): K196 and H215. D252 contributes to the Mn(2+) binding site. Residues E280, R316, and T441 each coordinate ATP. R316 contacts substrate.

The protein belongs to the phosphoenolpyruvate carboxykinase (ATP) family. Mn(2+) serves as cofactor.

The protein resides in the cytoplasm. It catalyses the reaction oxaloacetate + ATP = phosphoenolpyruvate + ADP + CO2. The protein operates within carbohydrate biosynthesis; gluconeogenesis. Functionally, involved in the gluconeogenesis. Catalyzes the conversion of oxaloacetate (OAA) to phosphoenolpyruvate (PEP) through direct phosphoryl transfer between the nucleoside triphosphate and OAA. The protein is Phosphoenolpyruvate carboxykinase (ATP) of Nitratiruptor sp. (strain SB155-2).